We begin with the raw amino-acid sequence, 1202 residues long: MVGHLVKYGKHRTRRSYASIKEVLDVPNLIEIQTASYQWFLNDGIKEMFGDIMPIDDFQGTLSLEYVDYQLMEPKYNIDEAREHDANYSAPLHVTLRLTNHETGEIKSQDVFFGDFPLMTEQGTFIINGAERVIVSQLVRSPGIYYNQTTDKNGRPHFGTTVIPNRGAWLEYETDAKGIANVRIDRTRKLLMTELVRALGFGSDSDIIDIFSDQYDALNMTLEKDVHKDMSDSRVEEALKDVYERLRPGEPKTADSSRALLVARFFDPKRYDLASVGRYKINKKLSLKTRLLNQTLAETLADPDSGEIIAEKGTLVDKEVISKLTPYLDREDFKTTTYTPSGDAVLEEPVTLQKIKIESPENPEKTLLLIGNGHIDEDDRTVRPADILAGMNYFLNLQEGVGHVDDIDHLGNRRIRSVGELLQNQFRIGLTRMERVVRERMSIQDANTVTPQQLINIRPVVAAVKEFFGSSQLSQFMDQTNPLGEMNHKRRLSALGPGGLTRDRAGVEVRDVHYTHYGRIDPIETPEGPNIGLINSLATYGRINKYGFVETPYRRVDWTTHKVTDKIDYLTADEEDNYIVAQANSPLNEDGSFVHNTVMARFGEENIETPIDRIDYMDVSPKQVVSVGTAAIPFLENDDSNRALMGANMQRQAVPLLDPHSPLVGTGIEYKAAHDSGVAMIARASGEVEYVDGRQIRVRREDGQLDTYELMKFRRSNGGKNYNQKPIVHVGEHIEADEVLADGPSMEQGELALGQNPLIAFMTWQGYNFEDAIVLNERLVREDVYTSIHIEEYDSEARDTKLGPEEMTREIPNTGEDQLKDLDADGIIRVGAEVHDGDILVGKVTPKGVTELSAEERLLHAIFGEKAREVRDTSLRVPHGGGGVVQNVRIYTPENGDELAPGVNMMVRVYIAQKRKIQVGDKMAGRHGNKGTVSVVVPEEDMPYMPDGTPIDILLSPMGVPSRMNIGQVLELHLGFAAKKLGIHVASPVFDGASDDEIEMALREAGLPQDGKSVVYDGRTGEAFDKRVGVGVMHYMKLAHMVDDKIHARSIGPYSLVTQQPLGGKAQFGGQRFGEMEVWALEAYGAAYTLQEILTYKSDDVAGRVKVYESIIKGEPIPRPGVPESFRVLVKELQALGLDMQVLDGAGDEVELRQMDEDDSILPVDALEKLARTNPDLLNKDDEEVAAAFSKVEEQSQTFEEK.

Belongs to the RNA polymerase beta chain family. As to quaternary structure, the RNAP catalytic core consists of 2 alpha, 1 beta, 1 beta' and 1 omega subunit. When a sigma factor is associated with the core the holoenzyme is formed, which can initiate transcription.

It carries out the reaction RNA(n) + a ribonucleoside 5'-triphosphate = RNA(n+1) + diphosphate. In terms of biological role, DNA-dependent RNA polymerase catalyzes the transcription of DNA into RNA using the four ribonucleoside triphosphates as substrates. This Leuconostoc mesenteroides subsp. mesenteroides (strain ATCC 8293 / DSM 20343 / BCRC 11652 / CCM 1803 / JCM 6124 / NCDO 523 / NBRC 100496 / NCIMB 8023 / NCTC 12954 / NRRL B-1118 / 37Y) protein is DNA-directed RNA polymerase subunit beta.